We begin with the raw amino-acid sequence, 525 residues long: GMP synthase [glutamine-hydrolyzing] (525 aa).

The region spanning 9-207 (RVLILDFGSQ…VLEIAGCEPL (199 aa)) is the Glutamine amidotransferase type-1 domain. Cys86 acts as the Nucleophile in catalysis. Active-site residues include His181 and Glu183. One can recognise a GMPS ATP-PPase domain in the interval 208–400 (WTPANIVEDA…LGLPYDMVYR (193 aa)). 235 to 241 (SGGVDSS) contacts ATP.

Homodimer.

The enzyme catalyses XMP + L-glutamine + ATP + H2O = GMP + L-glutamate + AMP + diphosphate + 2 H(+). It functions in the pathway purine metabolism; GMP biosynthesis; GMP from XMP (L-Gln route): step 1/1. Its function is as follows. Catalyzes the synthesis of GMP from XMP. The sequence is that of GMP synthase [glutamine-hydrolyzing] from Teredinibacter turnerae (strain ATCC 39867 / T7901).